We begin with the raw amino-acid sequence, 122 residues long: Large ribosomal subunit protein uL14 (122 aa).

This sequence belongs to the universal ribosomal protein uL14 family. As to quaternary structure, part of the 50S ribosomal subunit. Forms a cluster with proteins L3 and L19. In the 70S ribosome, L14 and L19 interact and together make contacts with the 16S rRNA in bridges B5 and B8.

Functionally, binds to 23S rRNA. Forms part of two intersubunit bridges in the 70S ribosome. The protein is Large ribosomal subunit protein uL14 of Aeromonas salmonicida (strain A449).